The following is a 146-amino-acid chain: Aspartate carbamoyltransferase regulatory chain (146 aa).

C102, C107, C131, and C134 together coordinate Zn(2+).

This sequence belongs to the PyrI family. Contains catalytic and regulatory chains. The cofactor is Zn(2+).

Its function is as follows. Involved in allosteric regulation of aspartate carbamoyltransferase. This chain is Aspartate carbamoyltransferase regulatory chain, found in Clostridium botulinum (strain Okra / Type B1).